Reading from the N-terminus, the 2145-residue chain is Glutamate synthase [NADH] (2145 aa).

A propeptide spanning residues 1-53 is cleaved from the precursor; the sequence is MPVLKSDNFDPLEEAYEGGTIQNYNDEHHLHKSWANVIPDKRGLYDPDYEHDA. The active-site For GATase activity is the Cys54. Residues 54-455 form the Glutamine amidotransferase type-2 domain; the sequence is CGVGFVANKH…PGDLFLVDTQ (402 aa). 1132-1189 lines the FMN pocket; sequence LAETHQTLVLNDLRRNVVVQTDGQLRTGFDIAVAVLLGAESFTLATVPLIAMGCVMLR. Positions 1185, 1191, and 1196 each coordinate [3Fe-4S] cluster. The stretch at 1551-1600 forms a coiled coil; that stretch reads KKVLLKEKAEAAKAKAKATSEYLKKFRSNQEVDDEVNTLLIANQKAKEQE. NAD(+) is bound at residue 1928 to 1942; the sequence is GGGDTGNDCLGTSVR. Residue Thr2070 is modified to Phosphothreonine.

The protein belongs to the glutamate synthase family. As to quaternary structure, homotrimer. Requires [3Fe-4S] cluster as cofactor. It depends on FAD as a cofactor. FMN serves as cofactor.

The catalysed reaction is 2 L-glutamate + NAD(+) = L-glutamine + 2-oxoglutarate + NADH + H(+). It functions in the pathway amino-acid biosynthesis; L-glutamate biosynthesis via GLT pathway; L-glutamate from 2-oxoglutarate and L-glutamine (NAD(+) route): step 1/1. Its pathway is energy metabolism; nitrogen metabolism. With respect to regulation, inhibited by homocysteine sulfonamide. Its function is as follows. Forms L-glutamate from L-glutamine and 2-oxoglutarate. Represents an alternative pathway to L-glutamate dehydrogenase for the biosynthesis of L-glutamate. Participates with glutamine synthetase in ammonia assimilation processes. The enzyme is specific for NADH, L-glutamine and 2-oxoglutarate. The chain is Glutamate synthase [NADH] (GLT1) from Saccharomyces cerevisiae (strain ATCC 204508 / S288c) (Baker's yeast).